A 394-amino-acid polypeptide reads, in one-letter code: Choline/ethanolamine kinase (394 aa).

Alanine 2 carries the N-acetylalanine modification. The segment at 22–42 (GLLDAKCPEPIPNRRRSSSLS) is disordered. ATP contacts are provided by residues 75 to 81 (SGGLSNL), arginine 104, 146 to 152 (QYLPSRP), glutamine 244, and aspartate 264. 77–79 (GLS) serves as a coordination point for substrate.

Belongs to the choline/ethanolamine kinase family. Homodimer, and heterodimer with CHKA.

The catalysed reaction is choline + ATP = phosphocholine + ADP + H(+). The enzyme catalyses ethanolamine + ATP = phosphoethanolamine + ADP + H(+). Its pathway is phospholipid metabolism; phosphatidylethanolamine biosynthesis; phosphatidylethanolamine from ethanolamine: step 1/3. In terms of biological role, has a key role in phospholipid metabolism, and catalyzes the first step of phosphatidylethanolamine and phosphatidylcholine biosynthesis. The sequence is that of Choline/ethanolamine kinase (Chkb) from Rattus norvegicus (Rat).